Consider the following 173-residue polypeptide: NADH-quinone oxidoreductase subunit B 1 (173 aa).

Cys42, Cys43, Cys107, and Cys137 together coordinate [4Fe-4S] cluster.

This sequence belongs to the complex I 20 kDa subunit family. As to quaternary structure, NDH-1 is composed of 14 different subunits. Subunits NuoB, C, D, E, F, and G constitute the peripheral sector of the complex. The cofactor is [4Fe-4S] cluster.

The protein localises to the cell inner membrane. The catalysed reaction is a quinone + NADH + 5 H(+)(in) = a quinol + NAD(+) + 4 H(+)(out). In terms of biological role, NDH-1 shuttles electrons from NADH, via FMN and iron-sulfur (Fe-S) centers, to quinones in the respiratory chain. The immediate electron acceptor for the enzyme in this species is believed to be ubiquinone. Couples the redox reaction to proton translocation (for every two electrons transferred, four hydrogen ions are translocated across the cytoplasmic membrane), and thus conserves the redox energy in a proton gradient. The sequence is that of NADH-quinone oxidoreductase subunit B 1 from Anaeromyxobacter sp. (strain K).